A 669-amino-acid chain; its full sequence is DNA ligase (669 aa).

Residues 34-38 (DAEYD), 83-84 (SL), and glutamate 114 each bind NAD(+). Lysine 116 acts as the N6-AMP-lysine intermediate in catalysis. The NAD(+) site is built by arginine 137, glutamate 171, lysine 287, and lysine 311. Cysteine 405, cysteine 408, cysteine 423, and cysteine 428 together coordinate Zn(2+). The region spanning 591–669 (NVESYFAGKT…EERFLQELNK (79 aa)) is the BRCT domain.

This sequence belongs to the NAD-dependent DNA ligase family. LigA subfamily. It depends on Mg(2+) as a cofactor. Requires Mn(2+) as cofactor.

It catalyses the reaction NAD(+) + (deoxyribonucleotide)n-3'-hydroxyl + 5'-phospho-(deoxyribonucleotide)m = (deoxyribonucleotide)n+m + AMP + beta-nicotinamide D-nucleotide.. Functionally, DNA ligase that catalyzes the formation of phosphodiester linkages between 5'-phosphoryl and 3'-hydroxyl groups in double-stranded DNA using NAD as a coenzyme and as the energy source for the reaction. It is essential for DNA replication and repair of damaged DNA. In Bacillus mycoides (strain KBAB4) (Bacillus weihenstephanensis), this protein is DNA ligase.